The following is a 443-amino-acid chain: ATP-dependent protease ATPase subunit HslU (443 aa).

Residues Ile-19, Gly-61–Glu-66, Asp-256, Glu-321, and Arg-393 each bind ATP.

Belongs to the ClpX chaperone family. HslU subfamily. A double ring-shaped homohexamer of HslV is capped on each side by a ring-shaped HslU homohexamer. The assembly of the HslU/HslV complex is dependent on binding of ATP.

The protein localises to the cytoplasm. In terms of biological role, ATPase subunit of a proteasome-like degradation complex; this subunit has chaperone activity. The binding of ATP and its subsequent hydrolysis by HslU are essential for unfolding of protein substrates subsequently hydrolyzed by HslV. HslU recognizes the N-terminal part of its protein substrates and unfolds these before they are guided to HslV for hydrolysis. The protein is ATP-dependent protease ATPase subunit HslU of Cupriavidus pinatubonensis (strain JMP 134 / LMG 1197) (Cupriavidus necator (strain JMP 134)).